Consider the following 530-residue polypeptide: Negative elongation factor A (530 aa).

In terms of domain architecture, HDAg spans 89–248; it reads WVLMVADILK…TPIPPSRTPL (160 aa). Residues 125 to 188 form an NELF-C/D-binding region; it reads REKVSECEAS…LQKSTETAQQ (64 aa). Phosphothreonine is present on T157. Residues 189–248 form an RNAPII-binding region; sequence LKRSAGVPFHAKGRGLLRKMDTTTPLKGIPKQAPFRSPTTPSVFSPSGNRTPIPPSRTPL. 3 disordered regions span residues 213–248, 266–296, and 312–409; these read PLKG…RTPL, GAGR…VENA, and SLNS…TAQT. Residues S225 and S233 each carry the phosphoserine modification. Residues 225–238 are compositionally biased toward polar residues; it reads SPTTPSVFSPSGNR. T277 is subject to Phosphothreonine. Over residues 277-291 the composition is skewed to basic and acidic residues; sequence TLDTEVVEKPTKEET. Over residues 315–341 the composition is skewed to low complexity; that stretch reads SEPTLPSTSYLPSTPSVVPASSYIPSS. S363 carries the post-translational modification Phosphoserine.

Belongs to the NELF-A family. In terms of assembly, the NELF complex is composed of NELFA, NELFB, NELFCD and NELFE; NELFA and NELFCD form a stable subcomplex that binds to the N-terminus of NELFB. In vitro, the NELFA:NELFCD subcomplex binds to ssDNA and ssRNA in a sequence- and structure-dependent manner. Interacts with the RNA polymerase II complex when it is not phosphorylated by P-TEFb. Interacts with NELFB. As to expression, ubiquitous. Expressed in brain, heart, spleen, lung, liver, muscle, kidney and testis. Already expressed in 7 dpc embryos.

It localises to the nucleus. Functionally, essential component of the NELF complex, a complex that negatively regulates the elongation of transcription by RNA polymerase II. The NELF complex, which acts via an association with the DSIF complex and causes transcriptional pausing, is counteracted by the P-TEFb kinase complex. The chain is Negative elongation factor A (Nelfa) from Mus musculus (Mouse).